Reading from the N-terminus, the 379-residue chain is Alanine racemase (379 aa).

The Proton acceptor; specific for D-alanine role is filled by Lys-40. Lys-40 is subject to N6-(pyridoxal phosphate)lysine. Arg-138 provides a ligand contact to substrate. Catalysis depends on Tyr-267, which acts as the Proton acceptor; specific for L-alanine. Position 315 (Met-315) interacts with substrate.

This sequence belongs to the alanine racemase family. Requires pyridoxal 5'-phosphate as cofactor.

The enzyme catalyses L-alanine = D-alanine. It functions in the pathway amino-acid biosynthesis; D-alanine biosynthesis; D-alanine from L-alanine: step 1/1. In terms of biological role, catalyzes the interconversion of L-alanine and D-alanine. May also act on other amino acids. The chain is Alanine racemase (alr) from Halothermothrix orenii (strain H 168 / OCM 544 / DSM 9562).